The chain runs to 156 residues: Snaclec A14 (156 aa).

The signal sequence occupies residues 1-23 (MGRFIFVRVGLLVVFLSLSGTGA). Disulfide bonds link C27–C38, C55–C152, and C127–C144. Residues 34-153 (YDQHCYKAFD…CGDDYPFVCK (120 aa)) enclose the C-type lectin domain. An N-linked (GlcNAc...) asparagine glycan is attached at N141.

The protein belongs to the snaclec family. In terms of assembly, heterodimer; disulfide-linked. Expressed by the venom gland.

It is found in the secreted. In terms of biological role, interferes with one step of hemostasis (modulation of platelet aggregation, or coagulation cascade, for example). The protein is Snaclec A14 of Macrovipera lebetinus (Levantine viper).